A 775-amino-acid polypeptide reads, in one-letter code: Dipeptidyl peptidase 4 (775 aa).

The first 15 residues, 1–15 (MKLLSLLMLAGIAQA), serve as a signal peptide directing secretion. Residues N81, N111, N154, and N219 are each glycosylated (N-linked (GlcNAc...) asparagine). Catalysis depends on charge relay system residues S613, D690, and H725.

Belongs to the peptidase S9B family.

The protein resides in the secreted. The catalysed reaction is Release of an N-terminal dipeptide, Xaa-Yaa-|-Zaa-, from a polypeptide, preferentially when Yaa is Pro, provided Zaa is neither Pro nor hydroxyproline.. Extracellular dipeptidyl-peptidase which removes N-terminal dipeptides sequentially from polypeptides having unsubstituted N-termini provided that the penultimate residue is proline. Contributes to pathogenicity. This chain is Dipeptidyl peptidase 4 (DPP4), found in Trichophyton rubrum (Athlete's foot fungus).